The primary structure comprises 517 residues: Glycerol kinase 5 (517 aa).

The ATP site is built by S23 and T24. 3 residues coordinate glycerol: R93, D270, and Q271. ATP-binding residues include T292, G335, and G432.

It belongs to the FGGY kinase family.

It is found in the cytoplasm. The catalysed reaction is glycerol + ATP = sn-glycerol 3-phosphate + ADP + H(+). It functions in the pathway polyol metabolism; glycerol degradation via glycerol kinase pathway; sn-glycerol 3-phosphate from glycerol: step 1/1. In terms of biological role, skin-specific kinase that plays a key role in glycerol metabolism, catalyzing its phosphorylation to produce sn-glycerol 3-phosphate. Involved in skin-specific regulation of sterol regulatory element-binding protein (SREBP) processing and lipid biosynthesis. This chain is Glycerol kinase 5 (GK5), found in Gallus gallus (Chicken).